The primary structure comprises 458 residues: Transcription factor bHLH10 (458 aa).

The interval 1–49 (MEEERESLYEEMGCFDPNTPAEVTVESSFSQAEPPPPPPQVLVAGSTSN) is disordered. Residues 243–292 (SRKSRTSPTERERRVHFNDRFFDLKNLIPNPTKIDRASIVGEAIDYIKEL) enclose the bHLH domain. Residues 315-338 (KRARVGEGGGGEDQEEEEDTVNYK) are disordered. The segment covering 324–334 (GGEDQEEEEDT) has biased composition (acidic residues).

Homodimer.

Its subcellular location is the nucleus. The protein is Transcription factor bHLH10 (BHLH10) of Arabidopsis thaliana (Mouse-ear cress).